The primary structure comprises 227 residues: MSKISNALGRKDGNSGYTRVVGNAELGQLLSRVQATVISNGNELERLITQRCNLIENIDVFIEDTTRGNNVQNGVYLCLKKTFKKSKKYAESVKGIEPDMLIFIVESYRVCKVIELKDGDAFDTKKSQGEKEHLEKFATLFGAKIPFVTDYYICSFNQNDKKLIMAGFKGVFSLEHILTGKELCQILGISYQEILDIRRRDTEENFAYLIAEMMKIPEVREEVKKHF.

As to quaternary structure, homodimer.

The enzyme catalyses Endonucleolytic cleavage of DNA to give specific double-stranded fragments with terminal 5'-phosphates.. Its function is as follows. A P subtype restriction enzyme that recognizes the double-stranded sequence 5'-GANTC-3' and cleaves after G-1. This chain is Type II restriction enzyme HhaII (hhaIIR), found in Haemophilus parahaemolyticus.